The following is a 171-amino-acid chain: PIDD1 alternative open reading frame protein (171 aa).

Disordered stretches follow at residues 1–22 and 76–156; these read MSGL…RAGG and ILAS…LCPA. Over residues 84 to 99 the composition is skewed to low complexity; it reads GPSAAGGHPGPAASEP.

As to quaternary structure, interacts with calpain-2 catalytic subunit CAPN2. In terms of processing, cleaved in vitro following UV irradiation to induce caspase-mediated apoptosis and this cleavage is inhibited by a broad-spectrum caspase inhibitor.

It is found in the cytoplasm. The protein localises to the cytoskeleton. The sequence is that of PIDD1 alternative open reading frame protein from Homo sapiens (Human).